We begin with the raw amino-acid sequence, 475 residues long: Probable 5'-adenylylsulfate reductase 1, chloroplastic (475 aa).

The transit peptide at 1–63 (MASATASISS…AAEPARQPVS (63 aa)) directs the protein to the chloroplast. The interval 72–327 (AAPVAEDAAA…KAKECGLHKG (256 aa)) is reductase domain. Residues 341–475 (HKAGGANGNG…SLLAFVNSLR (135 aa)) enclose the Thioredoxin domain. Active-site nucleophile residues include cysteine 393 and cysteine 396. A disulfide bond links cysteine 393 and cysteine 396.

Belongs to the APS reductase family. [4Fe-4S] cluster is required as a cofactor.

The protein localises to the plastid. It localises to the chloroplast. It carries out the reaction glutathione disulfide + sulfite + AMP + 2 H(+) = adenosine 5'-phosphosulfate + 2 glutathione. Reduces sulfate for Cys biosynthesis. This Oryza sativa subsp. japonica (Rice) protein is Probable 5'-adenylylsulfate reductase 1, chloroplastic (APR1).